We begin with the raw amino-acid sequence, 155 residues long: Small ribosomal subunit protein uS7cz/uS7cy (155 aa).

Belongs to the universal ribosomal protein uS7 family. Part of the 30S ribosomal subunit.

Its subcellular location is the plastid. It is found in the chloroplast. Functionally, one of the primary rRNA binding proteins, it binds directly to 16S rRNA where it nucleates assembly of the head domain of the 30S subunit. This chain is Small ribosomal subunit protein uS7cz/uS7cy (rps7-A), found in Amborella trichopoda.